A 151-amino-acid chain; its full sequence is Large ribosomal subunit protein uL13 (151 aa).

The protein belongs to the universal ribosomal protein uL13 family. In terms of assembly, part of the 50S ribosomal subunit.

Functionally, this protein is one of the early assembly proteins of the 50S ribosomal subunit, although it is not seen to bind rRNA by itself. It is important during the early stages of 50S assembly. The polypeptide is Large ribosomal subunit protein uL13 (Microcystis aeruginosa (strain NIES-843 / IAM M-2473)).